A 247-amino-acid polypeptide reads, in one-letter code: TLC domain-containing protein 1 (247 aa).

Positions 1 to 27 are cleaved as a signal peptide; that stretch reads MPLLFHPAWPLLLGATLTFRALRRVLC. Topologically, residues 28 to 46 are extracellular; that stretch reads RLPQPAHVQTDPLRTWRWH. The TLC domain maps to 40–234; that stretch reads LRTWRWHNLL…LLRSDFCPER (195 aa). Residues 47 to 67 traverse the membrane as a helical segment; the sequence is NLLVSFTHSIVSGIWALLCLW. Residues 68–83 lie on the Cytoplasmic side of the membrane; it reads QTPEMLVEIETAWSAS. Residues 84–104 traverse the membrane as a helical segment; sequence GYLLVCFSAGYFIHDTVDIVV. Topologically, residues 105–123 are extracellular; it reads SKQTRASWEYLVHHVMAMG. Residues 124–144 constitute an intramembrane region (helical); the sequence is AFFSGIFWKRFVGGGVLTLLV. Residues 145–173 are Extracellular-facing; it reads EVSNIFLTLRMMMKINNAQDLLLYKVNKY. A helical membrane pass occupies residues 174–194; that stretch reads INLVMYFLFRLAPQAYLTKFF. The Cytoplasmic portion of the chain corresponds to 195 to 201; the sequence is LQYAGQR. Residues 202–222 traverse the membrane as a helical segment; it reads TLGTFLLAILLMLDLMIIIYF. The Extracellular segment spans residues 223–247; sequence SRLLRSDFCPERAPRRQQKDKFLTE.

It localises to the cell membrane. In terms of biological role, regulates the composition and fluidity of the plasma membrane. Inhibits the incorporation of membrane-fluidizing phospholipids containing omega-3 long-chain polyunsaturated fatty acids (LCPUFA) and thereby promotes membrane rigidity. Does not appear to have any effect on LCPUFA synthesis. The chain is TLC domain-containing protein 1 (Tlcd1) from Mus musculus (Mouse).